Consider the following 57-residue polypeptide: Sec-independent protein translocase protein TatAy (57 aa).

Residues Met1–Pro21 form a helical membrane-spanning segment.

This sequence belongs to the TatA/E family. In terms of assembly, forms a complex with TatCy. Two types of complexes exist: one composed of TatAy and TatCy, and another composed only of TatAy. Cytosolic TatA forms large complexes or aggregates.

The protein localises to the cell membrane. It localises to the cytoplasm. It is found in the cytosol. Its function is as follows. Part of the twin-arginine translocation (Tat) system that transports large folded proteins containing a characteristic twin-arginine motif in their signal peptide across membranes. TatA could form the protein-conducting channel of the Tat system. Required for YwbN secretion. This chain is Sec-independent protein translocase protein TatAy, found in Bacillus subtilis (strain 168).